Reading from the N-terminus, the 393-residue chain is Telomeric repeat-binding factor 2-interacting protein 1 (393 aa).

Alanine 2 carries the post-translational modification N-acetylalanine. Residues serine 36 and serine 43 each carry the phosphoserine modification. The 24-residue stretch at 78–101 (FISTQYILDCVDRNEKLDLEAYRL) folds into the BRCT domain. The disordered stretch occupies residues 104-132 (TEQASDPKPGASTEGSTEPEPQPLTGRIA). Residue lysine 111 forms a Glycyl lysine isopeptide (Lys-Gly) (interchain with G-Cter in SUMO2) linkage. A Myb-like domain is found at 125–185 (QPLTGRIAYT…SLKDRYLKHL (61 aa)). Phosphoserine occurs at positions 151 and 153. Residue lysine 191 forms a Glycyl lysine isopeptide (Lys-Gly) (interchain with G-Cter in SUMO2) linkage. Residues 193–304 (LLGNAPVSPS…EEEPKVSTQE (112 aa)) form a disordered region. Phosphoserine is present on residues serine 200 and serine 203. Residues lysine 205, lysine 209, and lysine 237 each participate in a glycyl lysine isopeptide (Lys-Gly) (interchain with G-Cter in SUMO2) cross-link. A compositionally biased stretch (basic and acidic residues) spans 223-252 (QNKRAPDLPEEECVKGEIKENGEADNKLFE). Acidic residues predominate over residues 282-297 (TPEEDSETQPDEEEEE). Lysine 366 is covalently cross-linked (Glycyl lysine isopeptide (Lys-Gly) (interchain with G-Cter in SUMO2)). The Nuclear localization signal signature appears at 377 to 393 (KKFGAQNVARRIEFRKK).

The protein belongs to the RAP1 family. Homodimer. Component of the shelterin complex (telosome) composed of TERF1, TERF2, TINF2, TERF2IP ACD and POT1. Binds to TERF2 (but not TERF1) with its C-terminus. Interacts with SLX4/BTBD12. Interacts with TERF2; the interaction is direct. Does not interact with TERF1. Associates with the I-kappa-B-kinase (IKK) core complex, composed of CHUK, IKBKB and IKBKG.

The protein localises to the nucleus. It is found in the cytoplasm. The protein resides in the chromosome. Its subcellular location is the telomere. Functionally, acts both as a regulator of telomere function and as a transcription regulator. Involved in the regulation of telomere length and protection as a component of the shelterin complex (telosome). In contrast to other components of the shelterin complex, it is dispensible for telomere capping and does not participate in the protection of telomeres against non-homologous end-joining (NHEJ)-mediated repair. Instead, it is required to negatively regulate telomere recombination and is essential for repressing homology-directed repair (HDR), which can affect telomere length. Does not bind DNA directly: recruited to telomeric double-stranded 5'-TTAGGG-3' repeats via its interaction with TERF2. Independently of its function in telomeres, also acts as a transcription regulator: recruited to extratelomeric 5'-TTAGGG-3' sites via its association with TERF2 or other factors, and regulates gene expression. When cytoplasmic, associates with the I-kappa-B-kinase (IKK) complex and acts as a regulator of the NF-kappa-B signaling by promoting IKK-mediated phosphorylation of RELA/p65, leading to activate expression of NF-kappa-B target genes. The protein is Telomeric repeat-binding factor 2-interacting protein 1 (Terf2ip) of Mus musculus (Mouse).